Consider the following 624-residue polypeptide: Chaperone protein HtpG (624 aa).

The a; substrate-binding stretch occupies residues 1–336; sequence MKGQETRGFQ…SNDLPLNVSR (336 aa). The b stretch occupies residues 337-552; sequence EILQDSTVTR…ADEMSTQMAK (216 aa). Residues 553–624 are c; sequence LFAAAGQSVP…IRRMNQLLVS (72 aa).

This sequence belongs to the heat shock protein 90 family. As to quaternary structure, homodimer. UMPylated on a histidine residue by YdiU under ATP-limited conditions.

The protein localises to the cytoplasm. UMPylation of the chaperone by YdiU negatively regulates its activity, facilitating Salmonella survival under ATP-limited conditions. Molecular chaperone. Has ATPase activity. In Salmonella typhimurium (strain LT2 / SGSC1412 / ATCC 700720), this protein is Chaperone protein HtpG.